Consider the following 98-residue polypeptide: PsbF-like protein (98 aa).

The next 2 helical transmembrane spans lie at 5–25 (VLLV…WLGK) and 73–93 (TAAV…ILAM).

This sequence belongs to the PsbE/PsbF family.

It is found in the membrane. Unknown. Resembles PsbF, one of the subunits of the photosystem II reaction center. However, it encodes asparagine rather than histidine at the site PsbF uses to bind heme. In Prochlorococcus marinus (strain MIT 9312), this protein is PsbF-like protein.